Reading from the N-terminus, the 148-residue chain is Receptor activity-modifying protein 1 (148 aa).

The signal sequence occupies residues 1–26 (MARALCRLPRRGLWLLLAHHLFMTTA). 3 disulfides stabilise this stretch: C27–C82, C40–C72, and C57–C104. Residues 27-118 (CQEANYGALL…RAVRDPPGSI (92 aa)) are Extracellular-facing. A helical membrane pass occupies residues 119-140 (LYPFIVVPITVTLLVTALVVWQ). The Cytoplasmic segment spans residues 141-148 (SKRTEGIV).

It belongs to the RAMP family. As to quaternary structure, heterodimer of CALCRL and RAMP1; the interaction induces allosteric modulation of CALCRL function and CGRP1/CALCA and CGRP2/CALCB ligand specificity. Heterodimer of CALCR and RAMP1; interaction forms the AMYR1 receptor complex for amylin/IAPP and CGRP1/CALCA ligands. As to expression, expressed in many tissues including the uterus, bladder, brain, pancreas and gastro-intestinal tract.

The protein localises to the cell membrane. In terms of biological role, accessory protein that interacts with and modulates the function of G-protein coupled receptors including calcitonin gene-related peptide type 1 receptor (CALCRL) and calcitonin receptor (CALCR). Required for the transport of CALCRL to the plasma membrane. Together with CALCRL, form the receptor complex for the calcitonin gene-related peptides CGRP1/CALCA and CGRP2/CALCB. Together with CALCR, form the AMYR1 receptor complex for amylin/IAPP and CGRP1/CALCA. In Homo sapiens (Human), this protein is Receptor activity-modifying protein 1.